Consider the following 372-residue polypeptide: Hydrogenase-1 small chain (372 aa).

The segment at residues 1 to 45 (MNNEETFYQAMRRQGVTRRSFLKYCSLAATSLGLGAGMAPKIAWA) is a signal peptide (tat-type signal). At 46–325 (LENKPRIPVV…PQMGTHSTAD (280 aa)) the chain is on the periplasmic side. Residues cysteine 62, cysteine 65, cysteine 160, cysteine 194, histidine 232, cysteine 235, cysteine 260, and cysteine 266 each contribute to the [4Fe-4S] cluster site. [3Fe-4S] cluster-binding residues include cysteine 275, cysteine 294, and cysteine 297. The helical transmembrane segment at 326 to 346 (TVGLTALGVVAAAVGVHAVAS) threads the bilayer. The interval 346-372 (SSVDQRRRHNQQPTETEHQPGNEDKQA) is disordered. The Cytoplasmic segment spans residues 347 to 372 (SVDQRRRHNQQPTETEHQPGNEDKQA). The span at 360-372 (ETEHQPGNEDKQA) shows a compositional bias: basic and acidic residues.

This sequence belongs to the [NiFe]/[NiFeSe] hydrogenase small subunit family. As to quaternary structure, heterodimer of a large and a small subunit. Requires [4Fe-4S] cluster as cofactor. [3Fe-4S] cluster serves as cofactor. In terms of processing, predicted to be exported by the Tat system. The position of the signal peptide cleavage has not been experimentally proven.

The protein resides in the cell inner membrane. The enzyme catalyses H2 + A = AH2. Its function is as follows. This is one of three S.flexneri hydrogenases synthesized in response to different physiological conditions. HYD1 is believed to have a role in hydrogen cycling during fermentative growth. This Shigella flexneri protein is Hydrogenase-1 small chain (hyaA).